A 211-amino-acid chain; its full sequence is ADESRDAAGEARPAPAPVRRRSSANYRAYATEPHAKSKKKISASRKLQLKTLMLQIAKQELEREAEERRGEKGRALSTRCQPLELAGLGFAELQDLCRQLHARVDKVDEERYDVEAKVTKNITEIADLTQKIFDLRGKFKRPTLRLRVRISADAMMQALLGTRAKETLDLRAHLKQVKKEDTEKENREVGDWRKNIDLLSGMEGRKKKFEG.

Ala-1 carries the post-translational modification N-acetylalanine. The interval 1–43 is disordered; sequence ADESRDAAGEARPAPAPVRRRSSANYRAYATEPHAKSKKKISA. Ser-4 carries the post-translational modification Phosphoserine. Ser-22 carries the phosphoserine; by PHK, PKA and PKD/PRKD1 modification. At Ser-23 the chain carries Phosphoserine; by PKA and PKD/PRKD1. Tyr-26 is subject to Phosphotyrosine. Thr-31 carries the post-translational modification Phosphothreonine; by STK4/MST1. Residues 32–79 form an involved in binding TNC region; sequence EPHAKSKKKISASRKLQLKTLMLQIAKQELEREAEERRGEKGRALSTR. Phosphoserine; by PKC/PRKCE is present on residues Ser-42 and Ser-44. A Phosphothreonine; by STK4/MST1 modification is found at Thr-51. Ser-77 bears the Phosphoserine mark. The residue at position 78 (Thr-78) is a Phosphothreonine. Phosphothreonine; by STK4/MST1 is present on residues Thr-129 and Thr-143. Residues 129-150 form an involved in binding TNC and actin region; the sequence is TQKIFDLRGKFKRPTLRLRVRI. Ser-151 bears the Phosphoserine; by PAK3 mark. Thr-182 bears the Phosphothreonine mark. Ser-200 is modified (phosphoserine).

Belongs to the troponin I family. As to quaternary structure, interacts with TRIM63. Binds to actin and tropomyosin. Interacts with STK4/MST1. Phosphorylated at Ser-22 and Ser-23 by PRKD1; phosphorylation reduces myofilament calcium sensitivity. Phosphorylated preferentially at Thr-31. Phosphorylation by STK4/MST1 alters its binding affinity to TNNC1 (cardiac Tn-C) and TNNT2 (cardiac Tn-T). Phosphorylated at Ser-42 and Ser-44 by PRKCE; phosphorylation increases myocardium contractile dysfunction. Ser-22 is one of three sites in the region of residues 1-48 that are phosphorylated by phosphorylase kinase.

Its function is as follows. Troponin I is the inhibitory subunit of troponin, the thin filament regulatory complex which confers calcium-sensitivity to striated muscle actomyosin ATPase activity. The polypeptide is Troponin I, cardiac muscle (TNNI3) (Oryctolagus cuniculus (Rabbit)).